We begin with the raw amino-acid sequence, 313 residues long: Protease HtpX homolog (313 aa).

2 helical membrane passes run 7–24 (AMLL…GYLI) and 29–46 (GMMI…FSYW). Residue H130 coordinates Zn(2+). E131 is an active-site residue. H134 contacts Zn(2+). Helical transmembrane passes span 145–165 (ITAT…FFGG) and 172–192 (PFGF…AMVV). A Zn(2+)-binding site is contributed by E201. The interval 282–313 (GNAPPASLREDEPGADGPWGRSASRARKGPWS) is disordered.

This sequence belongs to the peptidase M48B family. Requires Zn(2+) as cofactor.

Its subcellular location is the cell inner membrane. The chain is Protease HtpX homolog from Chelativorans sp. (strain BNC1).